Here is a 713-residue protein sequence, read N- to C-terminus: MIFSYKHLKKLANLNEISFEDVIKAFNLIGFEVEETKEIRHVENIKYGKVLKIYKNENSDNLTVCEIQFKDKIRIIQTTAKNVEINKYVMAFIPGSKLANNLIESKLLKGIISEGMLVGFDEMLGFEIKLVPKELSKNVIVLDEANLNEDPIANLELHDYLIDLAILPNRSDAISYLVMAKELAAFFGTKIDNDLICLKNLRVSKINSNLEGIFVKSKTLELKLYDKYLLLKSHLKLTNTYKDLENLILIHTGMPIHFLNLKSLEKVNIVSKSSSLEIANRTLKIDNNLVIEKSREIIAIPYLETQKEFEIKDSQKEFFIFMNILSPKEVRKTIKTLKLESSQIKQATKTISHGMQLNAIQYMQSLFEEIEIVNINLNLKPKEILFDHTFINRIAGFEIVKEQKFINAKKSLEILGFKFFEDKILVPAYRHDYTGPYDVIEELFRFYGYDNFPILQPEIKPFKIQKKYDFKFSLASKNYNEIKTYSLVAKEDNNFDPFNFKTEILMKTFPSEKRRIIRNSQAFSLLEIAEYNIKRKLEKINFFDFGMINEGKRALIFASNEKSFNEIKKDLFSLFSYKFELRKTKNNYLHPNASAHIFYENKLIGWMGKINPSLKISDLIFVEILLDEFNISKNQFKEYNFDPLKFRDITFSIEKNQSIDTYLKELKKIKNIFEVQIIDKFEKNEKLNITVRILLEDDAIKNLDEAILKNSWN.

One can recognise a tRNA-binding domain in the interval Ile39–Ala153. In terms of domain architecture, B5 spans Leu379–Ile454. Positions 432, 438, 441, and 442 each coordinate Mg(2+).

The protein belongs to the phenylalanyl-tRNA synthetase beta subunit family. Type 1 subfamily. In terms of assembly, tetramer of two alpha and two beta subunits. Mg(2+) serves as cofactor.

The protein localises to the cytoplasm. The catalysed reaction is tRNA(Phe) + L-phenylalanine + ATP = L-phenylalanyl-tRNA(Phe) + AMP + diphosphate + H(+). The sequence is that of Phenylalanine--tRNA ligase beta subunit from Mycoplasma mobile (strain ATCC 43663 / 163K / NCTC 11711) (Mesomycoplasma mobile).